Here is a 469-residue protein sequence, read N- to C-terminus: 3-isopropylmalate dehydratase large subunit (469 aa).

Cysteine 347, cysteine 408, and cysteine 411 together coordinate [4Fe-4S] cluster.

Belongs to the aconitase/IPM isomerase family. LeuC type 1 subfamily. In terms of assembly, heterodimer of LeuC and LeuD. The cofactor is [4Fe-4S] cluster.

The enzyme catalyses (2R,3S)-3-isopropylmalate = (2S)-2-isopropylmalate. Its pathway is amino-acid biosynthesis; L-leucine biosynthesis; L-leucine from 3-methyl-2-oxobutanoate: step 2/4. In terms of biological role, catalyzes the isomerization between 2-isopropylmalate and 3-isopropylmalate, via the formation of 2-isopropylmaleate. This is 3-isopropylmalate dehydratase large subunit from Actinobacillus pleuropneumoniae serotype 7 (strain AP76).